The primary structure comprises 459 residues: tRNA modification GTPase MnmE (459 aa).

(6S)-5-formyl-5,6,7,8-tetrahydrofolate-binding residues include R20, E85, and R124. One can recognise a TrmE-type G domain in the interval G221–Y380. K(+) is bound at residue N231. Residues N231 to S236, T250 to T256, and D275 to G278 contribute to the GTP site. Position 235 (S235) interacts with Mg(2+). K(+) contacts are provided by T250, I252, and T255. T256 is a binding site for Mg(2+). K459 is a binding site for (6S)-5-formyl-5,6,7,8-tetrahydrofolate.

It belongs to the TRAFAC class TrmE-Era-EngA-EngB-Septin-like GTPase superfamily. TrmE GTPase family. As to quaternary structure, homodimer. Heterotetramer of two MnmE and two MnmG subunits. The cofactor is K(+).

It localises to the cytoplasm. Its function is as follows. Exhibits a very high intrinsic GTPase hydrolysis rate. Involved in the addition of a carboxymethylaminomethyl (cmnm) group at the wobble position (U34) of certain tRNAs, forming tRNA-cmnm(5)s(2)U34. This Bacillus velezensis (strain DSM 23117 / BGSC 10A6 / LMG 26770 / FZB42) (Bacillus amyloliquefaciens subsp. plantarum) protein is tRNA modification GTPase MnmE.